A 281-amino-acid chain; its full sequence is 2-dehydro-3-deoxyphosphooctonate aldolase (281 aa).

It belongs to the KdsA family.

The protein localises to the cytoplasm. It carries out the reaction D-arabinose 5-phosphate + phosphoenolpyruvate + H2O = 3-deoxy-alpha-D-manno-2-octulosonate-8-phosphate + phosphate. It participates in carbohydrate biosynthesis; 3-deoxy-D-manno-octulosonate biosynthesis; 3-deoxy-D-manno-octulosonate from D-ribulose 5-phosphate: step 2/3. Its pathway is bacterial outer membrane biogenesis; lipopolysaccharide biosynthesis. In Hahella chejuensis (strain KCTC 2396), this protein is 2-dehydro-3-deoxyphosphooctonate aldolase.